A 237-amino-acid polypeptide reads, in one-letter code: Ditrans,polycis-undecaprenyl-diphosphate synthase ((2E,6E)-farnesyl-diphosphate specific) (237 aa).

Residue aspartate 11 is part of the active site. Residue aspartate 11 participates in Mg(2+) binding. Substrate-binding positions include 12 to 15, tryptophan 16, arginine 24, histidine 28, and 56 to 58; these read GNGR and SIE. The active-site Proton acceptor is the asparagine 59. Substrate contacts are provided by residues arginine 62, arginine 179, and 185 to 187; that span reads RLS. Mg(2+) is bound at residue glutamate 198.

It belongs to the UPP synthase family. In terms of assembly, homodimer. It depends on Mg(2+) as a cofactor.

It catalyses the reaction 8 isopentenyl diphosphate + (2E,6E)-farnesyl diphosphate = di-trans,octa-cis-undecaprenyl diphosphate + 8 diphosphate. In terms of biological role, catalyzes the sequential condensation of isopentenyl diphosphate (IPP) with (2E,6E)-farnesyl diphosphate (E,E-FPP) to yield (2Z,6Z,10Z,14Z,18Z,22Z,26Z,30Z,34E,38E)-undecaprenyl diphosphate (di-trans,octa-cis-UPP). UPP is the precursor of glycosyl carrier lipid in the biosynthesis of bacterial cell wall polysaccharide components such as peptidoglycan and lipopolysaccharide. The protein is Ditrans,polycis-undecaprenyl-diphosphate synthase ((2E,6E)-farnesyl-diphosphate specific) of Coxiella burnetii (strain RSA 493 / Nine Mile phase I).